The chain runs to 441 residues: MVKYIIKALVEVDGPVDEHDIIGAIFGQTEGLLDDFDLRELQEKGRIGRILVKLQRRGNKAVGEIYVPSNLDRVETALVAAMLESVDKVGPYPARISVVEIIDVRAEKIKKIIERAKEILKKWSQEKSVDIREILKEISETTKKSQLIEYGPEKLPAGPGVERSDTIIIVEGRADVLNLLRYGYDNVIALGGATTKVPETIKKLAKEKIAIAFVDGDRGGLMVLKNLLSQADIDYVARAPPGKEVEDLTAREIAKSLSNLIPASKMKEELLKVEKLQKEEVKEVAEKAEKVEAEEVVKKEEVAERGEEMESKAEGAEQPTATALEKAAAKEEVKQEVKTEEEKVKEYVMFIPDSVFEKAKEITGTLRSVLYDSQWNIVAEVPAKDVVSAIEEKGAYAVLHDGVITQRMLDVMSLKGGRLILGRRVARVSKRPKGVFVVLLS.

The 77-residue stretch at Asp165–Pro241 folds into the Toprim domain. Residues Glu171, Asp215, and Asp217 each coordinate Mg(2+). The span at Lys299–Gly315 shows a compositional bias: basic and acidic residues. A disordered region spans residues Lys299–Thr320.

It belongs to the archaeal DnaG primase family. As to quaternary structure, forms a ternary complex with MCM helicase and DNA. Component of the archaeal exosome complex. Mg(2+) is required as a cofactor.

It catalyses the reaction ssDNA + n NTP = ssDNA/pppN(pN)n-1 hybrid + (n-1) diphosphate.. RNA polymerase that catalyzes the synthesis of short RNA molecules used as primers for DNA polymerase during DNA replication. Also part of the exosome, which is a complex involved in RNA degradation. Acts as a poly(A)-binding protein that enhances the interaction between heteromeric, adenine-rich transcripts and the exosome. The polypeptide is DNA primase DnaG (Ignicoccus hospitalis (strain KIN4/I / DSM 18386 / JCM 14125)).